Here is a 306-residue protein sequence, read N- to C-terminus: Porphobilinogen deaminase (306 aa).

C239 is subject to S-(dipyrrolylmethanemethyl)cysteine.

Belongs to the HMBS family. Monomer. Dipyrromethane serves as cofactor.

The enzyme catalyses 4 porphobilinogen + H2O = hydroxymethylbilane + 4 NH4(+). The protein operates within porphyrin-containing compound metabolism; protoporphyrin-IX biosynthesis; coproporphyrinogen-III from 5-aminolevulinate: step 2/4. Tetrapolymerization of the monopyrrole PBG into the hydroxymethylbilane pre-uroporphyrinogen in several discrete steps. This is Porphobilinogen deaminase from Helicobacter acinonychis (strain Sheeba).